Here is a 323-residue protein sequence, read N- to C-terminus: Malate dehydrogenase (323 aa).

NAD(+)-binding positions include 20-25 and Asp-44; that span reads GAGRVG. Residues Arg-93 and Arg-99 each contribute to the substrate site. NAD(+) contacts are provided by residues Asn-106 and 129-131; that span reads VTN. Substrate-binding residues include Asn-131 and Arg-162. His-186 functions as the Proton acceptor in the catalytic mechanism.

Belongs to the LDH/MDH superfamily. MDH type 3 family.

It carries out the reaction (S)-malate + NAD(+) = oxaloacetate + NADH + H(+). In terms of biological role, catalyzes the reversible oxidation of malate to oxaloacetate. In Nostoc sp. (strain PCC 7120 / SAG 25.82 / UTEX 2576), this protein is Malate dehydrogenase.